The following is a 505-amino-acid chain: MGLHWQWLIWALVGLHVALATKWYGGGMDFNDPTAWLDDHLPCAQDLVVFPEYYPALLPLPEDISIDGLVFPREGAILLAEESTITFGSDKQPSCESDENKAYLKPPKSSKWFDPGTWTDKSKEFSTFTPELERIPCDDEQVIIKGHGPLAFDLENVQYLRLGQLILAGSSISKTYLEQLISRDLGQFLFYNAEYVQVEYYRGELCGCHKDFERLLEPVCHNVQEQCETPHCLSPVRPLGSCCLICGAILSTPTTHCTEGSRKELVAQISNLISQESLKDQIGLHVEFVGSQKFGNCLQAVVTDRHKYSERSLEFLQQNEHNWNKTGTTLKVSGRPYNPNVSFSSIVLILFCMALVGLVSVVILAHFMPENPYLNRIPQWIHDPRLWRWRHLGLRLRRNLLFNRFDNGGAEGGSSEGGASGVDRLGIMAYDPESGEVRERAFDNPMFEQGGALEEAAKESQEQDEILSVPKMETGDLDARSVVDEQELTEINLETCEADTDEETI.

Positions 1–20 (MGLHWQWLIWALVGLHVALA) are cleaved as a signal peptide. Topologically, residues 21-344 (TKWYGGGMDF…RPYNPNVSFS (324 aa)) are extracellular. A helical membrane pass occupies residues 345–365 (SIVLILFCMALVGLVSVVILA). At 366-505 (HFMPENPYLN…CEADTDEETI (140 aa)) the chain is on the cytoplasmic side. The segment at 451–482 (GALEEAAKESQEQDEILSVPKMETGDLDARSV) is disordered. Over residues 473–482 (ETGDLDARSV) the composition is skewed to basic and acidic residues.

As to expression, specifically expressed in nephrocytes.

Its subcellular location is the cell membrane. Functionally, required in the nephrocyte for normal uptake of proteins and elimination of toxins, and for maintenance of endocytic trafficking structures. May function together with Cubn. This is Protein amnionless from Drosophila melanogaster (Fruit fly).